Consider the following 88-residue polypeptide: Small ribosomal subunit protein uS15 (88 aa).

Belongs to the universal ribosomal protein uS15 family. In terms of assembly, part of the 30S ribosomal subunit. Forms a bridge to the 50S subunit in the 70S ribosome, contacting the 23S rRNA.

Its function is as follows. One of the primary rRNA binding proteins, it binds directly to 16S rRNA where it helps nucleate assembly of the platform of the 30S subunit by binding and bridging several RNA helices of the 16S rRNA. In terms of biological role, forms an intersubunit bridge (bridge B4) with the 23S rRNA of the 50S subunit in the ribosome. The sequence is that of Small ribosomal subunit protein uS15 from Mycoplasma capricolum subsp. capricolum (strain California kid / ATCC 27343 / NCTC 10154).